The primary structure comprises 166 residues: Transcription antitermination protein NusB (166 aa).

The segment covering 1–18 (MISDESDRFNPRDPKPAD) has biased composition (basic and acidic residues). The disordered stretch occupies residues 1–28 (MISDESDRFNPRDPKPADAGKPSKSAKR).

The protein belongs to the NusB family.

Functionally, involved in transcription antitermination. Required for transcription of ribosomal RNA (rRNA) genes. Binds specifically to the boxA antiterminator sequence of the ribosomal RNA (rrn) operons. This is Transcription antitermination protein NusB from Pseudomonas putida (strain W619).